The chain runs to 265 residues: Adenosylcobinamide-GDP ribazoletransferase (265 aa).

The next 7 helical transmembrane spans lie at 40 to 60 (IAYA…VVLV), 67 to 87 (LPAF…TGAF), 121 to 141 (GGCA…ALVA), 150 to 170 (LALV…LLAL), 191 to 211 (LACA…GFGI), 213 to 233 (TAFA…RLSG), and 243 to 263 (VAGA…LIFP).

Belongs to the CobS family. The cofactor is Mg(2+).

The protein localises to the cell inner membrane. The enzyme catalyses alpha-ribazole + adenosylcob(III)inamide-GDP = adenosylcob(III)alamin + GMP + H(+). It carries out the reaction alpha-ribazole 5'-phosphate + adenosylcob(III)inamide-GDP = adenosylcob(III)alamin 5'-phosphate + GMP + H(+). It participates in cofactor biosynthesis; adenosylcobalamin biosynthesis; adenosylcobalamin from cob(II)yrinate a,c-diamide: step 7/7. Functionally, joins adenosylcobinamide-GDP and alpha-ribazole to generate adenosylcobalamin (Ado-cobalamin). Also synthesizes adenosylcobalamin 5'-phosphate from adenosylcobinamide-GDP and alpha-ribazole 5'-phosphate. The polypeptide is Adenosylcobinamide-GDP ribazoletransferase (Xanthobacter autotrophicus (strain ATCC BAA-1158 / Py2)).